Reading from the N-terminus, the 317-residue chain is Melanocyte-stimulating hormone receptor (317 aa).

Topologically, residues 1–37 (MPVQGSQRRLLGSLNSTPTATPHLGLAANQTGARCRE) are extracellular. Asparagine 29 carries N-linked (GlcNAc...) asparagine glycosylation. A helical transmembrane segment spans residues 38–63 (VSIPDGLFLSLGLVSLVENVLVVTAI). Residues 64-72 (AKNRNLHSP) are Cytoplasmic-facing. The chain crosses the membrane as a helical span at residues 73–93 (MYCFICCLALSDLLVSGSNML). At 94–118 (ETAVTLLLEAGALVARAAVVQQLDN) the chain is on the extracellular side. The chain crosses the membrane as a helical span at residues 119-140 (VIDVITCSSMLSSLCFLGAIAV). Residues 141-163 (DRYISIFYALRYHSIVTLPRAQR) lie on the Cytoplasmic side of the membrane. A helical membrane pass occupies residues 164-183 (AIAAIWVASVLCSTLFIAYY). The Extracellular portion of the chain corresponds to 184-191 (DHAAVLLC). Residues 192-211 (LVVFFLAMLVLMAVLYVHML) form a helical membrane-spanning segment. At 212–240 (ARACQHAQGIARLHKRQRLAHQGFGLKGA) the chain is on the cytoplasmic side. Residues 241-266 (ATLTILLGIFFLCWGPFFLHLTLIVL) form a helical membrane-spanning segment. Topologically, residues 267 to 279 (CPQHPTCSCIFKN) are extracellular. A helical membrane pass occupies residues 280-300 (FNLFLALIICNAIIDPLIYAF). Residues 301–317 (RSQELRRTLKEVLLCSW) lie on the Cytoplasmic side of the membrane. The S-palmitoyl cysteine moiety is linked to residue cysteine 315.

It belongs to the G-protein coupled receptor 1 family. As to quaternary structure, interacts with MGRN1, but does not undergo MGRN1-mediated ubiquitination; this interaction competes with GNAS-binding and thus inhibits agonist-induced cAMP production. Interacts with OPN3; the interaction results in a decrease in MC1R-mediated cAMP signaling and ultimately a decrease in melanin production in melanocytes. Expressed in the adrenal gland.

It localises to the cell membrane. In terms of biological role, receptor for MSH (alpha, beta and gamma) and ACTH. The activity of this receptor is mediated by G proteins which activate adenylate cyclase. Mediates melanogenesis, the production of eumelanin (black/brown) and phaeomelanin (red/yellow), via regulation of cAMP signaling in melanocytes. This Macaca mulatta (Rhesus macaque) protein is Melanocyte-stimulating hormone receptor (MC1R).